A 220-amino-acid chain; its full sequence is Adenylate kinase (220 aa).

10–15 (GAGKGT) lines the ATP pocket. The segment at 30-59 (STGDMLRAAVKAGTPLGLKAKEVMDGGNLV) is NMP. AMP contacts are provided by residues T31, R36, 57 to 59 (NLV), 85 to 88 (GFPR), and Q92. Residues 122–159 (GRRVHPASGRTYHIRFNPPQTAGMDDETGEPLVQRADD) are LID. Residues R123 and 132–133 (TY) each bind ATP. The AMP site is built by R156 and R167. G205 is a binding site for ATP.

This sequence belongs to the adenylate kinase family. In terms of assembly, monomer.

It localises to the cytoplasm. The enzyme catalyses AMP + ATP = 2 ADP. It participates in purine metabolism; AMP biosynthesis via salvage pathway; AMP from ADP: step 1/1. In terms of biological role, catalyzes the reversible transfer of the terminal phosphate group between ATP and AMP. Plays an important role in cellular energy homeostasis and in adenine nucleotide metabolism. This chain is Adenylate kinase, found in Chlorobium luteolum (strain DSM 273 / BCRC 81028 / 2530) (Pelodictyon luteolum).